The chain runs to 185 residues: Intraflagellar transport protein 22 homolog (185 aa).

Residues 10 to 17, 63 to 67, and 123 to 126 each bind GTP; these read GPCESGKT, DCGGD, and HKPG.

Belongs to the small GTPase superfamily. Rab family. In terms of assembly, component of the IFT complex B, at least composed of IFT20, IFT22, IFT25, IFT27, IFT46, IFT52, TRAF3IP1/IFT54, IFT57, IFT74, IFT80, IFT81, and IFT88. Interacts with IFT88. Interacts with CFAP61.

It is found in the cell projection. The protein resides in the cilium. In terms of biological role, small GTPase-like component of the intraflagellar transport (IFT) complex B. In Bos taurus (Bovine), this protein is Intraflagellar transport protein 22 homolog (IFT22).